Reading from the N-terminus, the 324-residue chain is PTS system glucose-specific EIICBA component (324 aa).

One can recognise a PTS EIIC type-1 domain in the interval 1–63; sequence HLLNVKIGMT…KWDLATPGRE (63 aa). The next 2 membrane-spanning stretches (helical) occupy residues 5-25 and 28-48; these read VKIG…GVLP and TAWW…YFGF. The region spanning 78 to 159 is the PTS EIIB type-1 domain; that stretch reads GDLPYEVLAA…QDIMQGKAPA (82 aa). The Phosphocysteine intermediate; for EIIB activity role is filled by C100. The disordered stretch occupies residues 156–177; it reads KAPARAEEKPKTAASEAAESET. The span at 167-177 shows a compositional bias: low complexity; it reads TAASEAAESET. In terms of domain architecture, PTS EIIA type-1 spans 194 to 298; that stretch reads DQVFSQKMMG…SIVTPVIFTN (105 aa). H246 serves as the catalytic Tele-phosphohistidine intermediate; for EIIA activity.

Its subcellular location is the cell membrane. The enzyme catalyses N(pros)-phospho-L-histidyl-[protein] + D-glucose(out) = D-glucose 6-phosphate(in) + L-histidyl-[protein]. Functionally, the phosphoenolpyruvate-dependent sugar phosphotransferase system (sugar PTS), a major carbohydrate active transport system, catalyzes the phosphorylation of incoming sugar substrates concomitantly with their translocation across the cell membrane. This system is involved in glucose transport. The polypeptide is PTS system glucose-specific EIICBA component (ptsG) (Geobacillus stearothermophilus (Bacillus stearothermophilus)).